The following is a 320-amino-acid chain: Probable cell division protein WhiA (320 aa).

The H-T-H motif DNA-binding region spans 276-310 (TLKELGEMVAGGKISKSGINHRLRKIDEIAERLRA).

It belongs to the WhiA family.

Involved in cell division and chromosome segregation. This is Probable cell division protein WhiA from Geobacillus thermodenitrificans (strain NG80-2).